The sequence spans 180 residues: Stathmin-3 (180 aa).

The region spanning 38 to 180 (GDMEVKQLDK…NKEQREEISG (143 aa)) is the SLD domain. Low complexity predominate over residues 60–74 (SPSDLSPESPILSSP). Residues 60-82 (SPSDLSPESPILSSPPKKKDLSL) are disordered. Positions 75 to 179 (PKKKDLSLEE…RNKEQREEIS (105 aa)) form a coiled coil.

It belongs to the stathmin family.

The sequence is that of Stathmin-3 (STMN3) from Gallus gallus (Chicken).